A 482-amino-acid chain; its full sequence is Aspartyl/glutamyl-tRNA(Asn/Gln) amidotransferase subunit B (482 aa).

Belongs to the GatB/GatE family. GatB subfamily. As to quaternary structure, heterotrimer of A, B and C subunits.

It catalyses the reaction L-glutamyl-tRNA(Gln) + L-glutamine + ATP + H2O = L-glutaminyl-tRNA(Gln) + L-glutamate + ADP + phosphate + H(+). The catalysed reaction is L-aspartyl-tRNA(Asn) + L-glutamine + ATP + H2O = L-asparaginyl-tRNA(Asn) + L-glutamate + ADP + phosphate + 2 H(+). In terms of biological role, allows the formation of correctly charged Asn-tRNA(Asn) or Gln-tRNA(Gln) through the transamidation of misacylated Asp-tRNA(Asn) or Glu-tRNA(Gln) in organisms which lack either or both of asparaginyl-tRNA or glutaminyl-tRNA synthetases. The reaction takes place in the presence of glutamine and ATP through an activated phospho-Asp-tRNA(Asn) or phospho-Glu-tRNA(Gln). This Ehrlichia canis (strain Jake) protein is Aspartyl/glutamyl-tRNA(Asn/Gln) amidotransferase subunit B.